Reading from the N-terminus, the 359-residue chain is Membrane-bound lytic murein transglycosylase C (359 aa).

A signal peptide spans 1 to 16 (MKKYLALALIAPLLIS). A lipid anchor (N-palmitoyl cysteine) is attached at Cys17. Cys17 carries S-diacylglycerol cysteine lipidation.

This sequence belongs to the transglycosylase Slt family.

Its subcellular location is the cell outer membrane. It carries out the reaction Exolytic cleavage of the (1-&gt;4)-beta-glycosidic linkage between N-acetylmuramic acid (MurNAc) and N-acetylglucosamine (GlcNAc) residues in peptidoglycan, from either the reducing or the non-reducing ends of the peptidoglycan chains, with concomitant formation of a 1,6-anhydrobond in the MurNAc residue.. In terms of biological role, murein-degrading enzyme. May play a role in recycling of muropeptides during cell elongation and/or cell division. This Escherichia fergusonii (strain ATCC 35469 / DSM 13698 / CCUG 18766 / IAM 14443 / JCM 21226 / LMG 7866 / NBRC 102419 / NCTC 12128 / CDC 0568-73) protein is Membrane-bound lytic murein transglycosylase C.